The sequence spans 674 residues: MELDFIHTICPYCGTGCGVDLVVKDGTLVGTNPFKRHPVNEGKTCIKGSYCHEFVHRDDRLKTPLIRKNGELVEASWDEALELISGKLQNYSPEEVGFFSSARCTNEDNYVFQKFARTVIKTNNVDHCARLUHSATVVGLGQAFGSGAMTNSISDIEDADCIFIIGSNTFEQHPLIARRVVRAKEKGTKIIVIDPRYTPTAKQADLYLQLLPGTNIAVLNAIMHVLVKENLVDEEFIKNRTKGYEELKTTLETYTPEYASKLSGVAPELIVEAAKMYGSANAASILYCMGITQFTTGVNNVKSCCNLAMITGNIGKPGTGVNPLRGQNNVQGACDMGALPNVFPGYQAVPANHEKYAEAWNTCVDPNVGLSIPDMLAKAGEQVKCIYVMGENPMVSDPDIHHVEHALKSLDLLIVQDIFLTETAQVADVVLPGASWAEKDGTFSNTERRIQKINKAVDSPGEAIADWKIVKMLAEKMGQGELFNFNTAEEVFQEIAKVTPQYAGVTYERLGVDGLHWPCKTCEDPGTPILHCEKCLTPDGLGNIFAIDYADPDEMADSEYPMTLTTGRIIFHYHTGTMTRRSKHMADEINEGFVEIHPEDAEKMGIKNKQKVKVSTRRGEVVVNAKITPNIKQGVVFMPFHFAETAANILTNPAQDPNCKIPEYKVCAAKVEKI.

The 4Fe-4S Mo/W bis-MGD-type domain occupies 3 to 59 (LDFIHTICPYCGTGCGVDLVVKDGTLVGTNPFKRHPVNEGKTCIKGSYCHEFVHRDD). [4Fe-4S] cluster-binding residues include Cys-10, Cys-13, Cys-17, and Cys-45. Position 132 (Sec-132) is a non-standard amino acid, selenocysteine.

This sequence belongs to the prokaryotic molybdopterin-containing oxidoreductase family. As to quaternary structure, dimer of an alpha (FdhA1) and a beta (FdhB1) subunit. [4Fe-4S] cluster is required as a cofactor. The cofactor is Mo-bis(molybdopterin guanine dinucleotide). Zn(2+) serves as cofactor.

It carries out the reaction oxidized coenzyme F420-(gamma-L-Glu)(n) + formate + 2 H(+) = reduced coenzyme F420-(gamma-L-Glu)(n) + CO2. Its function is as follows. Catalyzes the oxidation of formate to carbon dioxide, with coenzyme F420 as the electron acceptor. In vitro can also use methyl viologen as electron acceptor. This chain is F420-dependent formate dehydrogenase 1 subunit alpha, found in Methanococcus maripaludis (strain DSM 14266 / JCM 13030 / NBRC 101832 / S2 / LL).